Reading from the N-terminus, the 1123-residue chain is Eukaryotic translation initiation factor 2-alpha kinase PK4 (1123 aa).

The interval 1 to 30 is disordered; it reads MKKRIRSSYKVGSSNKYHKKNYTDNEKDKK. Over residues 21-30 the composition is skewed to basic and acidic residues; that stretch reads NYTDNEKDKK. ATP contacts are provided by residues 245 to 253 and Lys-270; that span reads IGQGGFGSV. 3 disordered regions span residues 409–493, 572–609, and 742–800; these read FYSD…NDEG, RNED…NELD, and ENDD…DDDI. Residues 419 to 428 are compositionally biased toward basic and acidic residues; sequence KNKENPEKNH. The span at 455 to 477 shows a compositional bias: basic residues; the sequence is HKLKKRKNKKKKSKKKRKSKSKI. Tandem repeats lie at residues 576-582, 583-589, 590-596, 597-603, and 604-610. Residues 576 to 610 are 5 X 7 AA tandem repeat of D-K-N-[GE]-L-D-[GD]; that stretch reads DKNGLDGDKNGLDGDKNGLDGDKNGLDGDKNELDD. Residues 678–1049 form the Protein kinase domain; it reads TNVESINTNG…KIKVLLDPHL (372 aa). The segment covering 743–754 has biased composition (acidic residues); the sequence is NDDDDDDDDDDN. Asp-886 acts as the Proton acceptor in catalysis. Thr-953 bears the Phosphothreonine mark.

This sequence belongs to the protein kinase superfamily. Ser/Thr protein kinase family. GCN2 subfamily. May form oligomers in response to stress; oligomerization may result in catalytic activity. Interacts with BIP; the interaction is disrupted in response to stress. Auto-phosphorylated.

The protein resides in the endoplasmic reticulum membrane. The enzyme catalyses L-seryl-[protein] + ATP = O-phospho-L-seryl-[protein] + ADP + H(+). It carries out the reaction L-threonyl-[protein] + ATP = O-phospho-L-threonyl-[protein] + ADP + H(+). With respect to regulation, dissociation from BIP and oligomerization, may results autophosphorylation and kinase activity induction. Functionally, during the asexual blood stage, phosphorylates translation factor eIF2alpha in late schizonts resulting in protein translation inhibition. Plays a role in trophozoite differentiation into schizonts. The protein is Eukaryotic translation initiation factor 2-alpha kinase PK4 of Plasmodium falciparum.